Here is a 309-residue protein sequence, read N- to C-terminus: Olfactory receptor 5B2 (309 aa).

The Extracellular segment spans residues 1–23 (MENCTEVTKFILLGLTSVPELQI). N-linked (GlcNAc...) asparagine glycosylation occurs at Asn3. Residues 24 to 47 (PLFILFTFIYLLTLCGNLGMMLLI) traverse the membrane as a helical segment. Over 48–55 (LMDSCLHT) the chain is Cytoplasmic. Residues 56–77 (PMYFFLSNLSLVDFGYSSAVTP) form a helical membrane-spanning segment. The Extracellular segment spans residues 78 to 98 (KVMAGFLRGDKVISYNACAVQ). Residues Cys95 and Cys187 are joined by a disulfide bond. The chain crosses the membrane as a helical span at residues 99 to 118 (MFFFVALATVENYLLASMAY). At 119–137 (DRYAAVCKPLHYTTTMTAS) the chain is on the cytoplasmic side. A helical transmembrane segment spans residues 138–156 (VGACLALGSYVCGFLNASF). The Extracellular portion of the chain corresponds to 157-193 (HIGGIFSLSFCKSNLVHHFFCDVPAVMALSCSDKHTS). A helical transmembrane segment spans residues 194–217 (EVILVFMSSFNIFFVLLVIFISYL). Over 218-234 (FIFITILKMHSAKGHQK) the chain is Cytoplasmic. Residues 235–257 (ALSTCASHFTAVSVFYGTVIFIY) form a helical membrane-spanning segment. The Extracellular segment spans residues 258–270 (LQPSSSHSMDTDK). A helical membrane pass occupies residues 271–290 (MASVFYAMIIPMLNPVVYSL). Topologically, residues 291–309 (RNREVQNAFKKVLRRQKFL) are cytoplasmic.

It belongs to the G-protein coupled receptor 1 family.

The protein localises to the cell membrane. Functionally, odorant receptor. The polypeptide is Olfactory receptor 5B2 (OR5B2) (Homo sapiens (Human)).